The chain runs to 560 residues: DNA ligase B (560 aa).

Lys124 serves as the catalytic N6-AMP-lysine intermediate.

This sequence belongs to the NAD-dependent DNA ligase family. LigB subfamily.

It carries out the reaction NAD(+) + (deoxyribonucleotide)n-3'-hydroxyl + 5'-phospho-(deoxyribonucleotide)m = (deoxyribonucleotide)n+m + AMP + beta-nicotinamide D-nucleotide.. Functionally, catalyzes the formation of phosphodiester linkages between 5'-phosphoryl and 3'-hydroxyl groups in double-stranded DNA using NAD as a coenzyme and as the energy source for the reaction. The protein is DNA ligase B of Escherichia coli O6:H1 (strain CFT073 / ATCC 700928 / UPEC).